The chain runs to 320 residues: Replication factor C small subunit 2 (320 aa).

44 to 51 lines the ATP pocket; sequence GPPGTGKT.

This sequence belongs to the activator 1 small subunits family. RfcS subfamily. In terms of assembly, heteromultimer composed of small subunits (RfcS) and large subunits (RfcL).

Functionally, part of the RFC clamp loader complex which loads the PCNA sliding clamp onto DNA. This is Replication factor C small subunit 2 from Pyrobaculum islandicum (strain DSM 4184 / JCM 9189 / GEO3).